Consider the following 177-residue polypeptide: ATP synthase subunit delta (177 aa).

It belongs to the ATPase delta chain family. As to quaternary structure, F-type ATPases have 2 components, F(1) - the catalytic core - and F(0) - the membrane proton channel. F(1) has five subunits: alpha(3), beta(3), gamma(1), delta(1), epsilon(1). F(0) has three main subunits: a(1), b(2) and c(10-14). The alpha and beta chains form an alternating ring which encloses part of the gamma chain. F(1) is attached to F(0) by a central stalk formed by the gamma and epsilon chains, while a peripheral stalk is formed by the delta and b chains.

It localises to the cell inner membrane. Its function is as follows. F(1)F(0) ATP synthase produces ATP from ADP in the presence of a proton or sodium gradient. F-type ATPases consist of two structural domains, F(1) containing the extramembraneous catalytic core and F(0) containing the membrane proton channel, linked together by a central stalk and a peripheral stalk. During catalysis, ATP synthesis in the catalytic domain of F(1) is coupled via a rotary mechanism of the central stalk subunits to proton translocation. Functionally, this protein is part of the stalk that links CF(0) to CF(1). It either transmits conformational changes from CF(0) to CF(1) or is implicated in proton conduction. This Shewanella loihica (strain ATCC BAA-1088 / PV-4) protein is ATP synthase subunit delta.